Consider the following 517-residue polypeptide: Cytochrome b mRNA maturase bI3 (517 aa).

At 1-31 (MAFRKSNVYLSLVNSYIIDSPQPSSINYWWN) the chain is on the mitochondrial matrix side. The segment at 1–169 (MAFRKSNVYL…DIVSWLWGGF (169 aa)) is cytochrome b. The helical transmembrane segment at 32-52 (MGSLLGLCLVIQIVTGIFMAM) threads the bilayer. Residues 53-84 (HYSSNIELAFSSVEHIMRDVHNGYILRYLHAN) are Mitochondrial intermembrane-facing. A helical transmembrane segment spans residues 85–105 (GASFFFMVMFMHMAKGLYYGS). Over 106–115 (YRSPRVTLWN) the chain is Mitochondrial matrix. The helical transmembrane segment at 116-136 (VGVIIFILTIATAFLGYCCVY) threads the bilayer. Residues 137–145 (GQMSHWGAT) are Mitochondrial intermembrane-facing. The chain crosses the membrane as a helical span at residues 146–166 (VITNLFSAIPFVGNDIVSWLW). Topologically, residues 167-184 (GGFNMEDPYYSNMMLNKS) are mitochondrial matrix. Residues 170–517 (NMEDPYYSNM…NNYFKIPPKY (348 aa)) are maturase. Residues 185 to 205 (VLCWNIFIWMMNYYIIQLIIY) traverse the membrane as a helical segment. Topologically, residues 206–224 (NNMIWNKNNMVKMFIMRRK) are mitochondrial intermembrane. A helical membrane pass occupies residues 225-242 (LAVINMYMYMKLIIQRTY). Over 243-517 (SYYMNNTIIY…NNYFKIPPKY (275 aa)) the chain is Mitochondrial matrix.

The protein in the N-terminal section; belongs to the cytochrome b family. In the C-terminal section; belongs to the LAGLIDADG endonuclease family. In terms of assembly, forms a ribonucleoprotein complex composed of maturase bI3 and 2 dimers of MRS1 that assemble around the bI3 RNA.

The protein resides in the mitochondrion inner membrane. In terms of biological role, mitochondrial mRNA maturase required for splicing of intron 3 of the cytochrome b (COB) gene, containing its own coding sequence. In vivo splicing requires the formation of a ribonucleoprotein complex together with the imported mitochondrial RNA-splicing protein MRS1. The complex seems to stimulate the intrinsic ribozyme activity of intron bI3 through binding to and stabilizing specific secondary and tertiary structure elements in the RNA. This chain is Cytochrome b mRNA maturase bI3 (BI3), found in Saccharomyces cerevisiae (strain ATCC 204508 / S288c) (Baker's yeast).